The following is a 2760-amino-acid chain: A-kinase anchor protein 13 (2760 aa).

8 disordered regions span residues 356 to 388 (CSHKKNKDTGRPGEGVEPASAVDSRSASHQDSC), 442 to 517 (PDAR…EPKQ), 530 to 577 (AAGA…VLPA), 604 to 711 (SSLD…AAHN), 729 to 857 (EKDL…EQEG), 890 to 940 (GGSI…QEIS), 954 to 1029 (EKAL…ASEA), and 1132 to 1162 (EGTDLSCPTSKSKETPNNEETTQPPARDLPT). Positions 378–388 (DSRSASHQDSC) are enriched in polar residues. Residues 442–454 (PDARQHSSGRELP) are compositionally biased toward basic and acidic residues. An important for interaction with PRKAR2A region spans residues 482–504 (QNSKPQVGESAKERLENSDISSA). Residues 530–547 (AAGADAPAEASPAWSPEE) show a composition bias toward low complexity. Polar residues-rich tracts occupy residues 620 to 638 (KQNSESSAQHAQSLNSQAP), 654 to 664 (CPQSTETSSGG), and 701 to 711 (DTVTSDTAAHN). A compositionally biased stretch (low complexity) spans 769–780 (SSFSLASSPESE). Residue Ser776 is modified to Phosphoserine. Thr801 carries the post-translational modification Phosphothreonine. A compositionally biased stretch (basic and acidic residues) spans 814–826 (PDGRDLNDTDKVG). Residues 839-849 (ELQTSMGNTSP) are compositionally biased toward polar residues. Basic and acidic residues predominate over residues 906-931 (GKDKATKCPSVKEDVHSSEMSREDQR). Residue Thr932 is modified to Phosphothreonine. Polar residues-rich tracts occupy residues 958–972 (QHSNSPDTPSACLQT) and 1001–1020 (TSLSADSEQKTSSTEQSGSS). A Phosphoserine modification is found at Ser962. Residues 1213–1228 (SIEETATRIVEAVIKQ) are important for interaction with PRKAR2A. Disordered stretches follow at residues 1392 to 1411 (GVLQRESGSDSDLFHSPSDE), 1425 to 1508 (LLCD…VPAN), and 1520 to 1539 (SPFRRHSWGPGKNAASDAEM). Over residues 1428–1439 (DTTGSSSSTDDT) the composition is skewed to low complexity. Residues 1449–1472 (GSDVSLPQTSKLNRSRNHQSSNGF) show a composition bias toward polar residues. 5 positions are modified to phosphoserine: Ser1450, Ser1468, Ser1501, Ser1526, and Ser1585. Residues 1546 to 1695 (QVLGHVVRRP…SRPFHSASAN (150 aa)) are important for interaction with MAP2K3. Residues 1592 to 1628 (GGGVGNKPSSSLEISSANSSELRNPFSGEEQRSSLMS) form a disordered region. Residues 1600–1611 (SSSLEISSANSS) are compositionally biased toward low complexity. 3 positions are modified to phosphoserine: Ser1625, Ser1628, and Ser1630. Residue Lys1654 is modified to N6-methyllysine. The tract at residues 1733–1755 (RNKMSSSKKSKKEKDKKTLNGHT) is disordered. Residues 1753–1800 (GHTFSPIPIVGPINCSQCMKPFTNKDAYTCASCGAFVHKGCRENLASC) form a Phorbol-ester/DAG-type zinc finger. Phosphoserine is present on residues Ser1838, Ser1857, and Ser1891. Positions 1881–2760 (MSNTWKFLSH…VPAEGEEIFC (880 aa)) are interaction with ESR1. Thr1892 carries the post-translational modification Phosphothreonine. Phosphoserine is present on residues Ser1894 and Ser1907. Positions 1956 to 2153 (KRQEVIYELM…KDVIGAVDSK (198 aa)) constitute a DH domain. The 105-residue stretch at 2176–2280 (MRMKSGQMFA…WIQIIQDTIN (105 aa)) folds into the PH domain. A phosphoserine mark is found at Ser2292 and Ser2345. Positions 2292-2329 (SENEEEKRLLDTKARELKEQLQQKDQQILLLLEEKEMI) form a coiled coil. Thr2415 bears the Phosphothreonine mark. The interval 2422 to 2450 (HQLNASKGGEKEEGDDGQDLRRTESDSGL) is disordered. Residues 2439-2450 (QDLRRTESDSGL) are compositionally biased toward basic and acidic residues. Ser2511 and Ser2514 each carry phosphoserine. A coiled-coil region spans residues 2516–2632 (LIEQEKQRSL…LSQRQMEQDL (117 aa)). Disordered stretches follow at residues 2568–2588 (AEREETVRRRQQDLERDREEL) and 2660–2760 (TPSI…EIFC). Composition is skewed to polar residues over residues 2660-2684 (TPSITKSGSLDSELSVSPKRNSISR) and 2696-2711 (SSASQTKVPEGQSQAP). Ser2676 carries the post-translational modification Phosphoserine. Residues 2743–2752 (PGDGPAPEVP) show a composition bias toward low complexity.

Interacts with the cAMP-dependent protein kinase (PKA) holoenzyme and with the regulatory subunit PRKAR2A. Interacts with RHOA. Also interacts with RHOB and RHOC. Identified in a ternary complex with RHOA and PRKAR2A. Identified in a complex with NR3C1 and RHOA. Interacts with BRAF and KSR1. Identified in a complex with BRAF and KSR1. Component of a signaling complex containing at least AKAP13, PKN1, MAPK14, ZAK and MAP2K3. Within this complex, AKAP13 interacts directly with PKN1, which in turn recruits MAPK14, MAP2K3 and ZAK. Interacts (phosphorylated form) with YWHAB and YWHAZ. Interaction with YWHAB inhibits activation of RHOA, interferes with PKN1 binding and activation of MAP kinases. Interacts with GNA12. Interacts with IKBKB. Interacts with ESR1, THRA, PPARA and NME2. Interacts (via the C-terminal domain after the PH domain) with MEF2C and RXRB. Interacts (via the C-terminal domain after the PH domain) with PRKD1. Detected in bone osteoblasts (at protein level).

Its subcellular location is the cytoplasm. The protein localises to the cytosol. The protein resides in the cell cortex. It is found in the nucleus. It localises to the membrane. Functionally, scaffold protein that plays an important role in assembling signaling complexes downstream of several types of G protein-coupled receptors. Activates RHOA in response to signaling via G protein-coupled receptors via its function as Rho guanine nucleotide exchange factor. May also activate other Rho family members. Part of a kinase signaling complex that links ADRA1A and ADRA1B adrenergic receptor signaling to the activation of downstream p38 MAP kinases, such as MAPK11 and MAPK14. Part of a signaling complex that links ADRA1B signaling to the activation of RHOA and IKBKB/IKKB, leading to increased NF-kappa-B transcriptional activity. Part of a RHOA-dependent signaling cascade that mediates responses to lysophosphatidic acid (LPA), a signaling molecule that activates G-protein coupled receptors and potentiates transcriptional activation of the glucocorticoid receptor NR3C1. Part of a signaling cascade that stimulates MEF2C-dependent gene expression in response to lysophosphatidic acid (LPA). Part of a signaling pathway that activates MAPK11 and/or MAPK14 and leads to increased transcription activation of the estrogen receptors ESR1 and ESR2. Part of a signaling cascade that links cAMP and EGFR signaling to BRAF signaling and to PKA-mediated phosphorylation of KSR1, leading to the activation of downstream MAP kinases, such as MAPK1 or MAPK3. Functions as a scaffold protein that anchors cAMP-dependent protein kinase (PKA) and PRKD1. This promotes activation of PRKD1, leading to increased phosphorylation of HDAC5 and ultimately cardiomyocyte hypertrophy. Has no guanine nucleotide exchange activity on CDC42, Ras or Rac. Required for normal embryonic heart development, and in particular for normal sarcomere formation in the developing cardiomyocytes. Plays a role in cardiomyocyte growth and cardiac hypertrophy in response to activation of the beta-adrenergic receptor by phenylephrine or isoproterenol. Required for normal adaptive cardiac hypertrophy in response to pressure overload. Plays a role in osteogenesis. The sequence is that of A-kinase anchor protein 13 from Rattus norvegicus (Rat).